The primary structure comprises 378 residues: Putative aminoglycoside phosphotransferase (378 aa).

Residues arginine 79 and 134-136 (DYV) contribute to the ATP site. The active-site Proton acceptor is aspartate 249. Mg(2+) is bound by residues asparagine 254, aspartate 267, and glutamate 269.

Belongs to the aminoglycoside phosphotransferase family.

Functionally, might catalyze the phosphorylation of aminoglycosides and confer aminoglycoside antibiotics resistance. In Mycobacterium tuberculosis (strain CDC 1551 / Oshkosh), this protein is Putative aminoglycoside phosphotransferase.